A 386-amino-acid chain; its full sequence is Phosphomevalonate dehydratase large subunit (386 aa).

7 residues coordinate (R)-5-phosphomevalonate: glycine 48, valine 49, serine 50, asparagine 53, arginine 63, asparagine 79, and proline 80. Cysteine 110 contacts [4Fe-4S] cluster. Residues glutamate 129 and serine 130 each coordinate (R)-5-phosphomevalonate. Positions 283 and 342 each coordinate [4Fe-4S] cluster. Position 361 (lysine 361) interacts with (R)-5-phosphomevalonate.

The protein belongs to the AcnX type II large subunit family. As to quaternary structure, heterodimer composed of a large subunit (PMDh-L) and a small subunit (PMDh-S). The cofactor is [4Fe-4S] cluster.

The enzyme catalyses (R)-5-phosphomevalonate = (2E)-3-methyl-5-phosphooxypent-2-enoate + H2O. It participates in isoprenoid biosynthesis; isopentenyl diphosphate biosynthesis via mevalonate pathway. Its function is as follows. Component of a hydro-lyase that catalyzes the dehydration of mevalonate 5-phosphate (MVA5P) to form trans-anhydromevalonate 5-phosphate (tAHMP). Involved in the archaeal mevalonate (MVA) pathway, which provides fundamental precursors for isoprenoid biosynthesis, such as isopentenyl diphosphate (IPP) and dimethylallyl diphosphate (DMAPP). This Thermococcus kodakarensis (strain ATCC BAA-918 / JCM 12380 / KOD1) (Pyrococcus kodakaraensis (strain KOD1)) protein is Phosphomevalonate dehydratase large subunit.